Reading from the N-terminus, the 260-residue chain is Magnesium dechelatase SGRL, chloroplastic (260 aa).

The N-terminal 45 residues, 1 to 45 (MACYIVPYYHHPVLSHPNREIFSHRHHHHHRFCNNLLNRRISVPR), are a transit peptide targeting the chloroplast.

Belongs to the staygreen family. Interacts with the light harvesting complex II (LHCII). Interacts with the chlorophyll catabolic enzymes (CCEs) NYC1, NOL, PAO and RCCR. Expressed in cotyledons, pollen and young leaves.

It localises to the plastid. The protein localises to the chloroplast thylakoid. The catalysed reaction is chlorophyllide a + 2 H(+) = pheophorbide a + Mg(2+). Its function is as follows. Magnesium chelatase involved in chlorophyll a degradation in the chlorophyll-protein complexes of photosystem I (PSI) and photosystem II (PSII). Contributes to the degradation of PSI and PSII in the thylakoid membranes. Recombinant SGRL possesses high dechelating activity against chlorophyllide a, very low activity against chlorophyll a, and no activity against chlorophyll b. Contributes to abiotic stress-induced chlorophyll degradation and leaf yellowing during vegetative plant growth. This is Magnesium dechelatase SGRL, chloroplastic from Arabidopsis thaliana (Mouse-ear cress).